Here is a 275-residue protein sequence, read N- to C-terminus: Protein unc-50 homolog (275 aa).

Residues 1–26 (MTQYSHVKYTQSPTPSVVSGYSSASR) are compositionally biased toward polar residues. Residues 1 to 39 (MTQYSHVKYTQSPTPSVVSGYSSASRLHSPLPPPANHRR) form a disordered region. At 1 to 99 (MTQYSHVKYT…TKSQFARDDP (99 aa)) the chain is on the cytoplasmic side. Residues 100-120 (AFLVLLVVCLCVTSLGFAYVL) form a helical membrane-spanning segment. The Lumenal portion of the chain corresponds to 121–129 (GLSFWQSIS). A helical membrane pass occupies residues 130–150 (FIFYVVFVDCIFVGIIIASFF). At 151–178 (WAVTNRYLRTNSLEPDIEWGYAFDVHLN) the chain is on the cytoplasmic side. Residues 179–199 (AFFPPLMLLHFIQLFFYNWLI) form a helical membrane-spanning segment. At 200–207 (SQTWFISR) the chain is on the lumenal side. Residues 208 to 228 (FLGNTFWLMGMGYYVYITFLG) traverse the membrane as a helical segment. The Cytoplasmic portion of the chain corresponds to 229 to 239 (YNCIPHLKNTR). A helical transmembrane segment spans residues 240–260 (IILIALPIIFLLFLVVTIIGW). Topologically, residues 261–275 (NATISFVNFYKYRVY) are lumenal.

It belongs to the unc-50 family.

The protein localises to the golgi apparatus membrane. Required for cell surface expression of acetylcholine receptors. The chain is Protein unc-50 homolog from Drosophila melanogaster (Fruit fly).